The sequence spans 1222 residues: BOS complex subunit NOMO3 (1222 aa).

The signal sequence occupies residues 1–31 (MLVGQGAGPLGPAVVTAAVVLLLSGVGPAHG). Over 32 to 1155 (SEDIVVGCGG…NPTRKLPEQD (1124 aa)) the chain is Extracellular. N-linked (GlcNAc...) asparagine glycosylation is found at Asn50, Asn218, and Asn618. Residues 1156–1176 (IAQGSYIALPLTLLVLLAGYN) traverse the membrane as a helical segment. Residues 1177 to 1222 (HDKLIPLLLQLTSRLQGVGALGQAASDNSGPEDAKRQAKKQKTRRT) are Cytoplasmic-facing. The segment at 1198-1222 (GQAASDNSGPEDAKRQAKKQKTRRT) is disordered. Over residues 1213-1222 (QAKKQKTRRT) the composition is skewed to basic residues.

Component of the back of Sec61 (BOS) complex, composed of NCLN/Nicalin, NOMO (NOMO1, NOMO2 or NOMO3) and TMEM147. The BOS complex is part of the multi-pass translocon (MPT) complex, composed of three subcomplexes, the GEL complex (composed of RAB5IF/OPTI and TMCO1), the BOS complex (composed of NCLN/Nicalin, NOMO and TMEM147) and the PAT complex (composed of WDR83OS/Asterix and CCDC47). The MPT complex associates with the SEC61 complex. Due to the strong similarity between NOMO1, NOMO2 and NOMO3, similar interaction pattern probably occur for the three gene copies.

The protein localises to the endoplasmic reticulum membrane. Component of the multi-pass translocon (MPT) complex that mediates insertion of multi-pass membrane proteins into the lipid bilayer of membranes. The MPT complex takes over after the SEC61 complex: following membrane insertion of the first few transmembrane segments of proteins by the SEC61 complex, the MPT complex occludes the lateral gate of the SEC61 complex to promote insertion of subsequent transmembrane regions. This is BOS complex subunit NOMO3 (NOMO3) from Homo sapiens (Human).